The sequence spans 1119 residues: DNA-directed RNA polymerase D subunit 2b (1119 aa).

Asp-732 serves as a coordination point for Mg(2+). Zn(2+)-binding residues include Cys-1055, Cys-1058, Cys-1080, and Cys-1083. The C4-type zinc finger occupies 1055 to 1083 (CRKCKTYANVIERTPSSGRKIRGPYCRVC).

Belongs to the RNA polymerase beta chain family. In terms of assembly, component of the RNA polymerase IVa and IVb (Pol IV) complexes.

It localises to the nucleus. It catalyses the reaction RNA(n) + a ribonucleoside 5'-triphosphate = RNA(n+1) + diphosphate. In terms of biological role, DNA-dependent RNA polymerase catalyzes the transcription of DNA into RNA using the four ribonucleoside triphosphates as substrates. Second largest component of RNA polymerase IVa and IVb which mediate short-interfering RNAs (siRNA) accumulation and subsequent RNA-directed DNA methylation-dependent (RdDM) silencing of endogenous repeated sequences, including transposable largest subunit. Also required for full erasure of methylation elements. Required for intercellular RNA interference (RNAi) leading to systemic post-transcriptional gene silencing. In Arabidopsis thaliana (Mouse-ear cress), this protein is DNA-directed RNA polymerase D subunit 2b (NRPD2b).